Here is a 113-residue protein sequence, read N- to C-terminus: Regulator of rDNA transcription protein 7 (113 aa).

The next 2 helical transmembrane spans lie at 13–35 (FLPIASFLTILNRILFQYWLFYN) and 70–92 (FLLGFMVQLQSCVKLLPLYLLFL).

Its subcellular location is the membrane. Identified in a screen for mutants with decreased levels of rDNA transcription. This Saccharomyces cerevisiae (strain ATCC 204508 / S288c) (Baker's yeast) protein is Regulator of rDNA transcription protein 7 (RRT7).